Consider the following 69-residue polypeptide: Large ribosomal subunit protein bL31 (69 aa).

The Zn(2+) site is built by cysteine 17, cysteine 19, cysteine 37, and cysteine 40.

It belongs to the bacterial ribosomal protein bL31 family. Type A subfamily. Part of the 50S ribosomal subunit. It depends on Zn(2+) as a cofactor.

In terms of biological role, binds the 23S rRNA. This is Large ribosomal subunit protein bL31 from Caldanaerobacter subterraneus subsp. tengcongensis (strain DSM 15242 / JCM 11007 / NBRC 100824 / MB4) (Thermoanaerobacter tengcongensis).